Here is a 184-residue protein sequence, read N- to C-terminus: dCTP deaminase (184 aa).

107-112 contributes to the dCTP binding site; that stretch reads KSTYAR. The active-site Proton donor/acceptor is the glutamate 133. Residues glutamine 152, tyrosine 166, and glutamine 176 each contribute to the dCTP site.

It belongs to the dCTP deaminase family. As to quaternary structure, homotrimer.

The enzyme catalyses dCTP + H2O + H(+) = dUTP + NH4(+). The protein operates within pyrimidine metabolism; dUMP biosynthesis; dUMP from dCTP (dUTP route): step 1/2. Its function is as follows. Catalyzes the deamination of dCTP to dUTP. This chain is dCTP deaminase, found in Acidiphilium cryptum (strain JF-5).